Reading from the N-terminus, the 287-residue chain is ATP synthase gamma chain (287 aa).

This sequence belongs to the ATPase gamma chain family. As to quaternary structure, F-type ATPases have 2 components, CF(1) - the catalytic core - and CF(0) - the membrane proton channel. CF(1) has five subunits: alpha(3), beta(3), gamma(1), delta(1), epsilon(1). CF(0) has three main subunits: a, b and c.

The protein resides in the cell inner membrane. Produces ATP from ADP in the presence of a proton gradient across the membrane. The gamma chain is believed to be important in regulating ATPase activity and the flow of protons through the CF(0) complex. In Ruthia magnifica subsp. Calyptogena magnifica, this protein is ATP synthase gamma chain.